Consider the following 428-residue polypeptide: Leucine-rich repeat-containing protein 42 (428 aa).

LRR repeat units lie at residues 149–170 (VLCSLCLRNRYLVISEKLEEIK), 174–195 (ELTCLDLSCCKLGDEHELLEHL), 202–222 (SVTQLHLKDNCLSDAGVRKMT), 234–255 (NLTLLDLSCNPEITDAGIGYLF), and 259–280 (KLNCLDISGTGLKDIKTVKHKL). A disordered region spans residues 379–412 (KHEAISSQESKKSKKRPFEESETEQNNSSQPSKQ). Phosphoserine is present on residues S406 and S407.

The protein belongs to the LRRC42 family.

The chain is Leucine-rich repeat-containing protein 42 (LRRC42) from Homo sapiens (Human).